Here is a 459-residue protein sequence, read N- to C-terminus: Sulfide:quinone oxidoreductase, mitochondrial (459 aa).

The N-terminal 24 residues, 1–24 (MLTLNSTIKSVTGSFQSASMLARF), are a transit peptide targeting the mitochondrion. 35 to 39 (GGGSA) provides a ligand contact to FAD. Active-site cysteine persulfide intermediate residues include Cys204 and Cys383.

This sequence belongs to the SQRD family. Requires FAD as cofactor.

Its subcellular location is the mitochondrion. Catalyzes the oxidation of hydrogen sulfide, with the help of a quinone. The chain is Sulfide:quinone oxidoreductase, mitochondrial (hmt2) from Schizosaccharomyces pombe (strain 972 / ATCC 24843) (Fission yeast).